The primary structure comprises 615 residues: Chaperone protein HtpG (615 aa).

An a; substrate-binding region spans residues 1-335; the sequence is MSAEKQTHGF…APDLPLNVSR (335 aa). The interval 336–541 is b; the sequence is ELLQDYGPVQ…EDQLGPQMRR (206 aa). Positions 542–615 are c; the sequence is MLEAAGQPVP…RMQALLSQSV (74 aa).

It belongs to the heat shock protein 90 family. In terms of assembly, homodimer.

Its subcellular location is the cytoplasm. Its function is as follows. Molecular chaperone. Has ATPase activity. This Alcanivorax borkumensis (strain ATCC 700651 / DSM 11573 / NCIMB 13689 / SK2) protein is Chaperone protein HtpG.